We begin with the raw amino-acid sequence, 77 residues long: uncharacterized protein (77 aa).

The next 2 membrane-spanning stretches (helical) occupy residues 22–42 (VFAN…LPVG) and 44–64 (LIGL…FFLG).

Its subcellular location is the cell membrane. This is an uncharacterized protein from Methanocaldococcus jannaschii (strain ATCC 43067 / DSM 2661 / JAL-1 / JCM 10045 / NBRC 100440) (Methanococcus jannaschii).